The following is a 230-amino-acid chain: 6-carboxyhexanoate--CoA ligase (230 aa).

This sequence belongs to the BioW family. As to quaternary structure, homodimer. Mg(2+) serves as cofactor.

The enzyme catalyses heptanedioate + ATP + CoA = 6-carboxyhexanoyl-CoA + AMP + diphosphate. It functions in the pathway metabolic intermediate metabolism; pimeloyl-CoA biosynthesis; pimeloyl-CoA from pimelate: step 1/1. In terms of biological role, catalyzes the transformation of pimelate into pimeloyl-CoA with concomitant hydrolysis of ATP to AMP. This is 6-carboxyhexanoate--CoA ligase from Staphylococcus aureus (strain Mu3 / ATCC 700698).